The primary structure comprises 212 residues: Uridine kinase (212 aa).

Residue Gly13 to Ser20 coordinates ATP.

The protein belongs to the uridine kinase family.

It is found in the cytoplasm. It carries out the reaction uridine + ATP = UMP + ADP + H(+). It catalyses the reaction cytidine + ATP = CMP + ADP + H(+). It participates in pyrimidine metabolism; CTP biosynthesis via salvage pathway; CTP from cytidine: step 1/3. The protein operates within pyrimidine metabolism; UMP biosynthesis via salvage pathway; UMP from uridine: step 1/1. The chain is Uridine kinase from Shewanella oneidensis (strain ATCC 700550 / JCM 31522 / CIP 106686 / LMG 19005 / NCIMB 14063 / MR-1).